We begin with the raw amino-acid sequence, 274 residues long: Large ribosomal subunit protein uL2 (274 aa).

Residues 224 to 254 (AMNPVDHPHGGGEGRTGEGQAPVSPWNTLTK) are disordered. Residues 229-239 (DHPHGGGEGRT) are compositionally biased toward basic and acidic residues.

It belongs to the universal ribosomal protein uL2 family. As to quaternary structure, part of the 50S ribosomal subunit. Forms a bridge to the 30S subunit in the 70S ribosome.

One of the primary rRNA binding proteins. Required for association of the 30S and 50S subunits to form the 70S ribosome, for tRNA binding and peptide bond formation. It has been suggested to have peptidyltransferase activity; this is somewhat controversial. Makes several contacts with the 16S rRNA in the 70S ribosome. This chain is Large ribosomal subunit protein uL2, found in Leptothrix cholodnii (strain ATCC 51168 / LMG 8142 / SP-6) (Leptothrix discophora (strain SP-6)).